Reading from the N-terminus, the 618-residue chain is Methylmalonyl-CoA mutase small subunit (618 aa).

The protein belongs to the methylmalonyl-CoA mutase family. As to quaternary structure, heterodimer of an alpha and a beta chain. It depends on adenosylcob(III)alamin as a cofactor.

It carries out the reaction (R)-methylmalonyl-CoA = succinyl-CoA. It functions in the pathway metabolic intermediate metabolism; propanoyl-CoA degradation; succinyl-CoA from propanoyl-CoA: step 3/3. Functionally, catalyzes the isomerization of succinyl-CoA to methylmalonyl-CoA during synthesis of propionate from tricarboxylic acid-cycle intermediates. The sequence is that of Methylmalonyl-CoA mutase small subunit (mutA) from Porphyromonas gingivalis (strain ATCC BAA-308 / W83).